The sequence spans 130 residues: Small ribosomal subunit protein uS9 (130 aa).

The tract at residues Arg109 to Arg130 is disordered. A compositionally biased stretch (basic residues) spans Lys111 to Arg130.

The protein belongs to the universal ribosomal protein uS9 family.

This chain is Small ribosomal subunit protein uS9, found in Alkaliphilus metalliredigens (strain QYMF).